A 127-amino-acid polypeptide reads, in one-letter code: Fluoride-specific ion channel FluC (127 aa).

Helical transmembrane passes span 4 to 24 (LLLA…LLSM), 35 to 55 (LGTL…FAWF), 71 to 91 (TGFC…VFLL), and 103 to 123 (VFVN…LFSA). Gly75 and Thr78 together coordinate Na(+).

Belongs to the fluoride channel Fluc/FEX (TC 1.A.43) family.

It is found in the cell inner membrane. It carries out the reaction fluoride(in) = fluoride(out). With respect to regulation, na(+) is not transported, but it plays an essential structural role and its presence is essential for fluoride channel function. Its function is as follows. Fluoride-specific ion channel. Important for reducing fluoride concentration in the cell, thus reducing its toxicity. This Escherichia coli O8 (strain IAI1) protein is Fluoride-specific ion channel FluC.